The sequence spans 250 residues: Indole-3-glycerol phosphate synthase (250 aa).

The protein belongs to the TrpC family.

The catalysed reaction is 1-(2-carboxyphenylamino)-1-deoxy-D-ribulose 5-phosphate + H(+) = (1S,2R)-1-C-(indol-3-yl)glycerol 3-phosphate + CO2 + H2O. The protein operates within amino-acid biosynthesis; L-tryptophan biosynthesis; L-tryptophan from chorismate: step 4/5. This is Indole-3-glycerol phosphate synthase from Metallosphaera sedula (strain ATCC 51363 / DSM 5348 / JCM 9185 / NBRC 15509 / TH2).